A 98-amino-acid polypeptide reads, in one-letter code: Large ribosomal subunit protein uL23 (98 aa).

It belongs to the universal ribosomal protein uL23 family. In terms of assembly, part of the 50S ribosomal subunit. Contacts protein L29, and trigger factor when it is bound to the ribosome.

One of the early assembly proteins it binds 23S rRNA. One of the proteins that surrounds the polypeptide exit tunnel on the outside of the ribosome. Forms the main docking site for trigger factor binding to the ribosome. This is Large ribosomal subunit protein uL23 from Nitrosococcus oceani (strain ATCC 19707 / BCRC 17464 / JCM 30415 / NCIMB 11848 / C-107).